Here is a 3470-residue protein sequence, read N- to C-terminus: Mucin-4 (3470 aa).

The first 28 residues, Met1–Ala28, serve as a signal peptide directing secretion. A disordered region spans residues Thr32 to Gly163. The segment covering Ser37–Ser57 has biased composition (low complexity). Thr42, Thr44, Thr65, Thr68, Thr87, Thr91, Thr96, Thr97, Thr98, Thr99, Thr100, Thr103, Thr104, Thr106, Thr117, Thr130, Thr131, Thr132, Thr145, Thr146, Thr150, Thr151, Thr152, and Thr155 each carry an O-linked (GalNAc...) threonine glycan. Positions Arg43–Ser2501 are variable number of tandem repeats (VNTR). Positions Glu66–His85 are enriched in polar residues. Low complexity predominate over residues Thr86 to Ser111. Positions Arg112 to Gly129 are enriched in polar residues. The segment covering Thr130 to Ser162 has biased composition (low complexity). Asn188 carries an N-linked (GlcNAc...) asparagine glycan. A compositionally biased stretch (polar residues) spans Thr199 to Val220. 7 disordered regions span residues Thr199 to Ser679, Phe691 to Thr925, Thr938 to Val1219, Leu1232 to Val1400, Leu1413 to Val1524, Leu1537 to Thr1647, and Thr1660 to Thr1992. The span at Thr221–Thr232 shows a compositional bias: low complexity. A compositionally biased stretch (polar residues) spans Pro233–Ser243. 2 O-linked (GalNAc...) threonine glycosylation sites follow: Thr236 and Thr241. The span at Ser251–Thr272 shows a compositional bias: low complexity. Over residues Asp273–Ile283 the composition is skewed to polar residues. N-linked (GlcNAc...) asparagine glycosylation is found at Asn278 and Asn286. A compositionally biased stretch (low complexity) spans Thr284–Thr299. A glycan (O-linked (GalNAc...) threonine) is linked at Thr297. Over residues Pro300–Gln335 the composition is skewed to polar residues. A glycan (N-linked (GlcNAc...) asparagine) is linked at Asn311. A compositionally biased stretch (low complexity) spans Thr336–Thr346. Residues Pro347–Gln448 are compositionally biased toward polar residues. Thr357, Thr370, Thr371, Thr372, Thr385, and Thr423 each carry an O-linked (GalNAc...) threonine glycan. Over residues Ser449 to Ser470 the composition is skewed to low complexity. An N-linked (GlcNAc...) asparagine glycan is attached at Asn465. The span at Thr479–Pro489 shows a compositional bias: polar residues. The O-linked (GalNAc...) threonine glycan is linked to Thr494. The segment covering His496–Met510 has biased composition (low complexity). The span at Leu511–Gly577 shows a compositional bias: polar residues. Thr513 carries O-linked (GalNAc...) threonine glycosylation. N-linked (GlcNAc...) asparagine glycosylation is present at Asn517. Residues Thr542 and Thr545 are each glycosylated (O-linked (GalNAc...) threonine). Asn550 carries an N-linked (GlcNAc...) asparagine glycan. 18 O-linked (GalNAc...) threonine glycosylation sites follow: Thr551, Thr584, Thr585, Thr586, Thr587, Thr588, Thr592, Thr594, Thr599, Thr605, Thr618, Thr619, Thr620, Thr633, Thr634, Thr639, Thr640, and Thr655. The segment covering Thr578–Thr599 has biased composition (low complexity). The span at His600–Pro631 shows a compositional bias: polar residues. The span at Ser632 to Ser647 shows a compositional bias: low complexity. Polar residues-rich tracts occupy residues Thr653 to Ser679 and Phe691 to Gly701. N-linked (GlcNAc...) asparagine glycosylation is present at Asn674. O-linked (GalNAc...) threonine glycosylation is found at Thr702, Thr708, Thr709, Thr710, Thr711, and Thr716. A compositionally biased stretch (low complexity) spans Thr702–Ser723. N-linked (GlcNAc...) asparagine glycosylation is present at Asn718. Polar residues predominate over residues Arg724–Glu741. A compositionally biased stretch (low complexity) spans Thr742–Val772. O-linked (GalNAc...) threonine glycosylation is found at Thr743, Thr744, Thr757, and Thr758. Positions Val780–Lys824 are enriched in polar residues. Asn798 is a glycosylation site (N-linked (GlcNAc...) asparagine). Over residues Gly825 to Gly848 the composition is skewed to low complexity. Residues Thr826, Thr832, Thr833, Thr834, Thr839, Thr840, Thr842, Thr846, and Thr853 are each glycosylated (O-linked (GalNAc...) threonine). The segment covering Asp849–Pro879 has biased composition (polar residues). Residue Asn875 is glycosylated (N-linked (GlcNAc...) asparagine). Residues Ser880–Ser895 are compositionally biased toward low complexity. Thr901 and Thr902 each carry an O-linked (GalNAc...) threonine glycan. Residues Thr901–Thr925 are compositionally biased toward polar residues. The N-linked (GlcNAc...) asparagine glycan is linked to Asn922. A compositionally biased stretch (low complexity) spans Lys948–Ser968. Thr950, Thr952, Thr956, Thr957, Thr958, Thr959, Thr963, and Thr964 each carry an O-linked (GalNAc...) threonine glycan. N-linked (GlcNAc...) asparagine glycosylation is present at Asn966. Over residues Ala969–Pro1003 the composition is skewed to polar residues. O-linked (GalNAc...) threonine glycosylation is found at Thr990, Thr991, Thr992, Thr1005, Thr1006, Thr1011, Thr1012, and Thr1015. The span at Ser1004–Ser1019 shows a compositional bias: low complexity. The segment covering Val1020–Gln1065 has biased composition (polar residues). The N-linked (GlcNAc...) asparagine glycan is linked to Asn1024. Thr1025, Thr1026, Thr1027, Thr1029, and Thr1038 each carry an O-linked (GalNAc...) threonine glycan. N-linked (GlcNAc...) asparagine glycosylation is found at Asn1046, Asn1072, and Asn1091. Residues Ser1066–Thr1083 are compositionally biased toward low complexity. The segment covering Asn1091–Ser1120 has biased composition (polar residues). Residues Ser1121–Thr1140 show a composition bias toward low complexity. Residues Thr1125, Thr1126, Thr1127, Thr1128, Thr1132, Thr1133, Thr1135, Thr1140, Thr1174, Thr1198, and Thr1207 are each glycosylated (O-linked (GalNAc...) threonine). Composition is skewed to polar residues over residues His1141–Val1219 and Leu1232–Gly1242. N-linked (GlcNAc...) asparagine glycosylation occurs at Asn1215. O-linked (GalNAc...) threonine glycans are attached at residues Thr1243, Thr1245, Thr1249, Thr1250, Thr1251, Thr1252, Thr1256, Thr1257, Thr1259, Thr1263, Thr1270, Thr1283, Thr1284, Thr1285, Thr1298, Thr1299, Thr1304, Thr1305, Thr1318, and Thr1319. Residues Thr1243 to Ser1264 show a composition bias toward low complexity. A compositionally biased stretch (polar residues) spans Arg1265–Pro1296. Residues Ser1297–Ser1312 are compositionally biased toward low complexity. Positions Thr1318–Pro1353 are enriched in polar residues. N-linked (GlcNAc...) asparagine glycosylation is present at Asn1339. O-linked (GalNAc...) threonine glycans are attached at residues Thr1341, Thr1342, Thr1355, Thr1356, Thr1365, Thr1368, Thr1372, Thr1375, Thr1376, Thr1377, and Thr1379. Over residues Ser1354 to Val1390 the composition is skewed to low complexity. Polar residues-rich tracts occupy residues Leu1391–Val1400 and Leu1413–Pro1477. Asn1396 carries an N-linked (GlcNAc...) asparagine glycan. O-linked (GalNAc...) threonine glycans are attached at residues Thr1426, Thr1430, Thr1431, Thr1440, Thr1451, Thr1453, Thr1464, Thr1465, and Thr1466. The N-linked (GlcNAc...) asparagine glycan is linked to Asn1471. Low complexity predominate over residues Ser1478–Thr1489. 4 O-linked (GalNAc...) threonine glycosylation sites follow: Thr1479, Thr1480, Thr1499, and Thr1512. Polar residues-rich tracts occupy residues Gln1490–Val1524 and Leu1537–Gln1553. Asn1520 is a glycosylation site (N-linked (GlcNAc...) asparagine). O-linked (GalNAc...) threonine glycosylation is found at Thr1554, Thr1555, Thr1557, and Thr1562. The span at Thr1554–Ser1569 shows a compositional bias: low complexity. The span at Arg1570–Glu1587 shows a compositional bias: polar residues. O-linked (GalNAc...) threonine glycosylation is found at Thr1588, Thr1589, Thr1590, Thr1604, Thr1609, Thr1627, Thr1635, and Thr1636. Low complexity predominate over residues Thr1588 to Thr1609. Residues Ala1610 to Thr1647 show a composition bias toward polar residues. Asn1644 is a glycosylation site (N-linked (GlcNAc...) asparagine). Residues Lys1670–Ser1693 are compositionally biased toward low complexity. Thr1672, Thr1674, Thr1678, Thr1679, Thr1680, Thr1681, Thr1685, Thr1686, Thr1688, Thr1699, and Thr1714 each carry an O-linked (GalNAc...) threonine glycan. Over residues Arg1694–Pro1725 the composition is skewed to polar residues. Asn1721 carries an N-linked (GlcNAc...) asparagine glycan. Over residues Ser1726–Gly1742 the composition is skewed to low complexity. Over residues Thr1747 to Glu1837 the composition is skewed to polar residues. Residue Asn1770 is glycosylated (N-linked (GlcNAc...) asparagine). Residues Thr1838, Thr1839, Thr1840, Thr1854, Thr1873, Thr1874, Thr1888, Thr1889, and Thr1891 are each glycosylated (O-linked (GalNAc...) threonine). The segment covering Thr1838–Thr1859 has biased composition (low complexity). Positions Ala1860–Val1877 are enriched in polar residues. Over residues Thr1878–Gln1895 the composition is skewed to low complexity. A glycan (N-linked (GlcNAc...) asparagine) is linked at Asn1896. A compositionally biased stretch (polar residues) spans Asn1896 to Asn1927. A compositionally biased stretch (low complexity) spans Pro1928–Ser1945. 11 O-linked (GalNAc...) threonine glycosylation sites follow: Thr1930, Thr1931, Thr1932, Thr1933, Thr1937, Thr1938, Thr1940, Thr1964, Thr1965, Thr1966, and Thr1980. Polar residues predominate over residues Tyr1946–Thr1992. Asn2022 carries N-linked (GlcNAc...) asparagine glycosylation. A compositionally biased stretch (polar residues) spans Ser2037–Gln2055. Disordered regions lie at residues Ser2037–His2107, Gln2139–Pro2185, Thr2205–Ser2237, and Thr2262–Leu2368. O-linked (GalNAc...) threonine glycosylation is found at Thr2056 and Thr2057. Positions Thr2056 to Ser2071 are enriched in low complexity. Residues Arg2072–Gly2089 are compositionally biased toward polar residues. Residues Thr2090, Thr2091, and Thr2092 are each glycosylated (O-linked (GalNAc...) threonine). Low complexity predominate over residues Thr2090–His2107. Residue Asn2104 is glycosylated (N-linked (GlcNAc...) asparagine). Residues Thr2105 and Thr2106 are each glycosylated (O-linked (GalNAc...) threonine). N-linked (GlcNAc...) asparagine glycans are attached at residues Asn2148, Asn2182, and Asn2225. 2 stretches are compositionally biased toward polar residues: residues Thr2205–Ala2229 and Thr2262–Ile2303. O-linked (GalNAc...) threonine glycosylation is found at Thr2264, Thr2352, Thr2354, Thr2359, and Thr2360. Residues Thr2344–Pro2367 show a composition bias toward low complexity. The region spanning Pro2458–Glu2613 is the NIDO domain. The 113-residue stretch at Glu2614 to Arg2726 folds into the AMOP domain. The VWFD domain maps to Arg2738–Leu2937. Residues Asn2755, Asn2773, Asn2801, Asn2827, Asn2844, Asn2853, Asn2888, Asn2909, Asn2916, Asn2932, Asn2958, Asn2985, Asn3003, Asn3014, Asn3054, Asn3079, Asn3102, Asn3109, Asn3157, and Asn3174 are each glycosylated (N-linked (GlcNAc...) asparagine). Residues Pro3173–Phe3212 enclose the EGF-like 1 domain. 3 disulfides stabilise this stretch: Cys3177–Cys3188, Cys3182–Cys3200, and Cys3202–Cys3211. N-linked (GlcNAc...) asparagine glycans are attached at residues Asn3240, Asn3247, and Asn3353. One can recognise an EGF-like 2 domain in the interval Val3382–Glu3421. Intrachain disulfides connect Cys3385/Cys3396, Cys3390/Cys3405, and Cys3407/Cys3420. A helical transmembrane segment spans residues Gly3432–Phe3452.

In terms of assembly, a heterodimeric complex, composed of a mucin-4 alpha chain and a cysteine-rich transmembrane mucin-4 beta chain. Mucin-4 beta chain interacts with ERBB2 via the EGF-like domain 1. In nonpolarized cells, associates with ERBB2 and ERBB3. Proteolytically cleaved into 2 chains, mucin-4 alpha chain and mucin-4 beta chain. Post-translationally, highly O-glycosylated. In terms of processing, predominantly N-glycosylated. In terms of tissue distribution, expressed in trachea, duodenum and intestine. Lower expression in stomach, salivary glands, liver, gallbladder, and kidney.

It localises to the cell membrane. The protein localises to the secreted. Membrane-bound mucin, a family of highly glycosylated proteins that constitute the major component of the mucus, the slimy and viscous secretion covering epithelial surfaces. These glycoproteins play important roles in the protection of the epithelium and are implicated in epithelial renewal and differentiation. Regulates cellular behavior through both anti-adhesive effects on cell-cell and cell-extracellular matrix interactions and its ability to act as an intramembrane ligand for ERBB2. Plays an important role in proliferation and differentiation of epithelial cells by inducing specific phosphorylation of ERBB2. In polarized epithelial cells, segregates ERBB2 and other ERBB receptors and prevents ERBB2 from acting as a coreceptor. The interaction with ERBB2 leads to enhanced expression of CDKN1B. The formation of a MUC4-ERBB2-ERBB3-NRG1 complex leads to down-regulation of CDKN1B, resulting in repression of apoptosis and stimulation of proliferation. Its ability to promote tumor growth may be mainly due to repression of apoptosis as opposed to proliferation. This chain is Mucin-4 (Muc4), found in Mus musculus (Mouse).